The primary structure comprises 622 residues: MEDSEPERKRARADEATAGGSRSEDEDEDDEDYVPYVPLRQRRQLLLQKLLQRRRKGATEEEQQDSGSEPRGDEDDIPLGPQSNVSLLDQHQHLKEKAEARKESAKEKQLKEEEKILESVAEGRALMSVKEMAKGITYDDPIKTSWTPPRYVLSMSEERHERVRKKYHILVEGDGIPPPIKSFKEMKFPAAILRGLKKKGILHPTPIQIQGIPTILSGRDMIGIAFTGSGKTLVFTLPVIMFCLEQEKRLPFSKREGPYGLIICPSRELARQTHGILEYYCRLLQEDSSPLLRCALCIGGMSVKEQMETIRHGVHMMVATPGRLMDLLQKKMVSLDICRYLALDEADRMIDMGFEGDIRTIFSYFKGQRQTLLFSATMPKKIQNFAKSALVKPVTINVGRAGAASLDVIQEVEYVKEEAKMVYLLECLQKTPPPVLIFAEKKADVDAIHEYLLLKGVEAVAIHGGKDQEERTKAIEAFREGKKDVLVATDVASKGLDFPAIQHVINYDMPEEIENYVHRIGRTGRSGNTGIATTFINKACDESVLMDLKALLLEAKQKVPPVLQVLHCGDESMLDIGGERGCAFCGGLGHRITDCPKLEAMQTKQVSNIGRKDYLAHSSMDF.

The span at 1–15 shows a compositional bias: basic and acidic residues; the sequence is MEDSEPERKRARADE. 2 disordered regions span residues 1–39 and 51–84; these read MEDS…YVPL and LQRR…PQSN. Ser-4 carries the phosphoserine modification. Lys-9 is subject to N6-acetyllysine. Residue Lys-9 forms a Glycyl lysine isopeptide (Lys-Gly) (interchain with G-Cter in ubiquitin) linkage. Residues Ser-21 and Ser-23 each carry the phosphoserine modification. Over residues 24-33 the composition is skewed to acidic residues; sequence EDEDEDDEDY. Tyr-33 is modified (phosphotyrosine). A Glycyl lysine isopeptide (Lys-Gly) (interchain with G-Cter in ubiquitin) cross-link involves residue Lys-115. Residues 181–209 carry the Q motif motif; the sequence is KSFKEMKFPAAILRGLKKKGILHPTPIQI. Positions 212 to 396 constitute a Helicase ATP-binding domain; it reads IPTILSGRDM…KSALVKPVTI (185 aa). 225–232 contributes to the ATP binding site; the sequence is AFTGSGKT. The DEAD box motif lies at 344-347; that stretch reads DEAD. Residues 407–567 form the Helicase C-terminal domain; the sequence is DVIQEVEYVK…KVPPVLQVLH (161 aa). Tyr-414 bears the Phosphotyrosine mark. Glycyl lysine isopeptide (Lys-Gly) (interchain with G-Cter in SUMO2) cross-links involve residues Lys-416 and Lys-442. A CCHC-type zinc finger spans residues 580–597; it reads RGCAFCGGLGHRITDCPK.

Belongs to the DEAD box helicase family. DDX41 subfamily. As to quaternary structure, identified in the spliceosome C complex. Interacts with ERCC6. Interacts with FAM50A. Interacts with STING1. Interacts with CGAS. Interacts with several spliceosomes components such as PRP19 or CDC5L. Acetylation at Lys-9 regulates the nuclear/cytoplasmic localization. Post-translationally, phosphorylated by BTK; phosphorylation induces binding to dsDNA and STING1. In terms of processing, 'Lys-48'-linked ubiquitinated and degraded by TRIM21 leading to negative regulation of the innate immune response to intracellular dsDNA.

Its subcellular location is the nucleus. It localises to the cytoplasm. The enzyme catalyses ATP + H2O = ADP + phosphate + H(+). In terms of biological role, multifunctional protein that participates in many aspects of cellular RNA metabolism. Plays pivotal roles in innate immune sensing and hematopoietic homeostasis. Recognizes foreign or self-nucleic acids generated during microbial infection, thereby initiating anti-pathogen responses. Mechanistically, phosphorylation by BTK allows binding to dsDNA leading to interaction with STING1. Modulates the homeostasis of dsDNA through its ATP-dependent DNA-unwinding activity and ATP-independent strand-annealing activity. In turn, induces STING1-mediated type I interferon and cytokine responses to DNA and DNA viruses. During murine leukemia virus infection, primarily senses the DNA/RNA hybrid generated at the first step of reverse transcription, while cGAS recognizes dsDNA generated at the next step and both are needed for the antiretroviral innate immune response. Selectively modulates the transcription of certain immunity-associated genes by regulating their alternative splicing. Binds to RNA (R)-loops, structures consisting of DNA/RNA hybrids and a displaced strand of DNA that occur during transcription, and prevents their accumulation, thereby maintaining genome stability. Also participates in pre-mRNA splicing, translational regulation and snoRNA processing, which is essential for ribosome biogenesis. The polypeptide is Probable ATP-dependent RNA helicase DDX41 (Ddx41) (Mus musculus (Mouse)).